The sequence spans 399 residues: Probable sugar efflux transporter (399 aa).

12 helical membrane-spanning segments follow: residues 15 to 35 (VVTL…PVGL), 50 to 70 (VGMM…PFML), 81 to 101 (LIGL…AWSF), 103 to 123 (VLVI…SITS), 136 to 156 (AQAL…GIPI), 168 to 188 (MTFL…VKLL), 209 to 229 (PALV…YTAY), 246 to 266 (FATV…ILFG), 273 to 293 (ASGL…LLLP), 301 to 321 (LMLL…GMQV), 333 to 353 (VAMS…ALVG), and 364 to 384 (SIGY…LMIF).

The protein belongs to the major facilitator superfamily. SotB (TC 2.A.1.2) family.

It localises to the cell inner membrane. Its function is as follows. Involved in the efflux of sugars. The physiological role may be the reduction of the intracellular concentration of toxic sugars or sugar metabolites. In Klebsiella pneumoniae (strain 342), this protein is Probable sugar efflux transporter.